We begin with the raw amino-acid sequence, 407 residues long: Acetate kinase (407 aa).

Asn-10 lines the Mg(2+) pocket. Lys-17 serves as a coordination point for ATP. Arg-91 provides a ligand contact to substrate. The Proton donor/acceptor role is filled by Asp-150. ATP is bound by residues 210-214, 285-287, and 338-342; these read HLGNG, DCR, and GIGEN. Glu-392 lines the Mg(2+) pocket.

Belongs to the acetokinase family. Homodimer. Requires Mg(2+) as cofactor. The cofactor is Mn(2+).

It is found in the cytoplasm. The enzyme catalyses acetate + ATP = acetyl phosphate + ADP. The protein operates within metabolic intermediate biosynthesis; acetyl-CoA biosynthesis; acetyl-CoA from acetate: step 1/2. Functionally, catalyzes the formation of acetyl phosphate from acetate and ATP. Can also catalyze the reverse reaction. This Mannheimia succiniciproducens (strain KCTC 0769BP / MBEL55E) protein is Acetate kinase.